The following is a 662-amino-acid chain: Potassium channel KAT3 (662 aa).

Over 1 to 90 (MSTTTTEARS…HFDRRYRLWE (90 aa)) the chain is Cytoplasmic. The chain crosses the membrane as a helical span at residues 91-111 (LFLVILVGYSAWASLFELAFE). The Extracellular segment spans residues 112–118 (KAAEGAL). A helical membrane pass occupies residues 119–139 (LTIDLVVDFFFAVDIILTFFV). The Cytoplasmic portion of the chain corresponds to 140–163 (SYLDNTTYLNVTDHKLIAKRYLKS). Residues 164-184 (VAFVMDVASTLPIQFIYKTIT) form a helical membrane-spanning segment. Over 185–194 (GDVGRGQAFG) the chain is Extracellular. Residues 195 to 215 (FLNLLRLWRLRRVAELFKRLE) form a helical; Voltage-sensor membrane-spanning segment. Residues 216–229 (KDAHFNYFVIRVIK) are Cytoplasmic-facing. The chain crosses the membrane as a helical span at residues 230-250 (LLCVTIFWIHLAGCILYWIAY). At 251–277 (HYPRPTDTWIGSQVEDFKERSVWLGYT) the chain is on the extracellular side. An intramembrane region (pore-forming) is located at residues 278–297 (YSMYWSIVTLTTVGYGDLHA). The Extracellular segment spans residues 298 to 301 (VNSR). A helical transmembrane segment spans residues 302–322 (EKTFNMFYMLFNIGLTSYIIG). The Cytoplasmic portion of the chain corresponds to 323–662 (IMTNLVVHGA…LRENDHLYIF (340 aa)). Position 406-527 (406-527 (LFKGFPEGLL…MIIANFMTYL (122 aa))) interacts with a nucleoside 3',5'-cyclic phosphate. A coiled-coil region spans residues 528–558 (KGLNDELKKEIPFLRDLLDDADAQVQETVQS). A KHA domain is found at 591 to 662 (RVIIHGQAPP…LRENDHLYIF (72 aa)).

This sequence belongs to the potassium channel family. Plant (TC 1.A.1.4) subfamily. As to quaternary structure, the potassium channel is probably composed of a homo- or heterotetrameric complex of pore-forming subunits. May interact with AKT1 and AKT2. Interacts with SLAC1. As to expression, expressed predominantly in root hairs and root endodermis and, at a lower level, in leaf nodes, trichomes, and hydathodes.

The protein resides in the membrane. Functionally, probable modulatory (alpha) subunit of inward-rectifying potassium channels. Could mediate potassium uptake from the soil solution by plant roots in association with AKT1. The protein is Potassium channel KAT3 (KAT3) of Arabidopsis thaliana (Mouse-ear cress).